We begin with the raw amino-acid sequence, 506 residues long: Maturase K (506 aa).

Belongs to the intron maturase 2 family. MatK subfamily.

It localises to the plastid. It is found in the chloroplast. Functionally, usually encoded in the trnK tRNA gene intron. Probably assists in splicing its own and other chloroplast group II introns. The sequence is that of Maturase K from Rhododendron tsusiophyllum (Rhododendron).